Here is a 199-residue protein sequence, read N- to C-terminus: Holliday junction branch migration complex subunit RuvA (199 aa).

The domain I stretch occupies residues 1–65 (MIGWLHGQII…EDALLLYGFL (65 aa)). The domain II stretch occupies residues 66–144 (DKEERSLFRS…QFDGSVSDTF (79 aa)). The interval 144–148 (FQKQA) is flexible linker. The segment at 149–199 (GSTHSQQEAISALEALGYKPQEAWKVVNKIDNGNKSCEQLIREALQILSSR) is domain III.

It belongs to the RuvA family. In terms of assembly, homotetramer. Forms an RuvA(8)-RuvB(12)-Holliday junction (HJ) complex. HJ DNA is sandwiched between 2 RuvA tetramers; dsDNA enters through RuvA and exits via RuvB. An RuvB hexamer assembles on each DNA strand where it exits the tetramer. Each RuvB hexamer is contacted by two RuvA subunits (via domain III) on 2 adjacent RuvB subunits; this complex drives branch migration. In the full resolvosome a probable DNA-RuvA(4)-RuvB(12)-RuvC(2) complex forms which resolves the HJ.

Its subcellular location is the cytoplasm. The RuvA-RuvB-RuvC complex processes Holliday junction (HJ) DNA during genetic recombination and DNA repair, while the RuvA-RuvB complex plays an important role in the rescue of blocked DNA replication forks via replication fork reversal (RFR). RuvA specifically binds to HJ cruciform DNA, conferring on it an open structure. The RuvB hexamer acts as an ATP-dependent pump, pulling dsDNA into and through the RuvAB complex. HJ branch migration allows RuvC to scan DNA until it finds its consensus sequence, where it cleaves and resolves the cruciform DNA. This Legionella pneumophila (strain Paris) protein is Holliday junction branch migration complex subunit RuvA.